Reading from the N-terminus, the 355-residue chain is MIMTLRWFGKNFDSVTLKQIRQIPGVKGVITTLYDSKVGDAWKEEDVKNIKKEVEDAGLKIYGIESVNILDDIKIGLPSRDKYIENYIKTLEVLGKEGINLVCYNFMPVFDWTRSDLAKVRPDGSTVLSYDQDIIDKIDPQKMFEQIDSNSNGFVLPGWEPERLSRLKELFEMYKGIDDEKLFENLKYFLTAIMPTCEKYNIKMAIHPDDPAWPVFGLPRIIVNKENILRMVNSVNSPCNGITLCAGSLGSNPKNDIPDIIRSLKGKIFFAHVRNLEHTAPGKFQEAAHLSSDGSMDMFAIMKAFYDIGFEGPFRPDHGRAIWDEVSMPGYGLYDRALGAVYLQGLWEAIEKMGK.

Belongs to the mannonate dehydratase family. Fe(2+) serves as cofactor. It depends on Mn(2+) as a cofactor.

The catalysed reaction is D-mannonate = 2-dehydro-3-deoxy-D-gluconate + H2O. It participates in carbohydrate metabolism; pentose and glucuronate interconversion. Functionally, catalyzes the dehydration of D-mannonate. In Brachyspira hyodysenteriae (strain ATCC 49526 / WA1), this protein is Mannonate dehydratase.